The sequence spans 181 residues: Reverse rubrerythrin-1 (181 aa).

The region spanning 1–35 is the Rubredoxin-like domain; the sequence is MKKFKCVVCGYIYTGEDAPEKCPVCGAGKDKFVEV. Cysteine 6, cysteine 9, cysteine 22, cysteine 25, glutamate 69, glutamate 102, glutamate 132, glutamate 165, and histidine 168 together coordinate Fe cation. The region spanning 52 to 181 is the Ferritin-like diiron domain; that stretch reads KGVDKEVLEG…FRGLLNRYFK (130 aa).

In terms of assembly, homodimer. It depends on Fe(3+) as a cofactor.

It carries out the reaction H2O2 + NADH + H(+) = NAD(+) + 2 H2O. Its function is as follows. Functions as the terminal component of an NADH peroxidase (NADH:H(2)O(2) oxidoreductase) when using NADH:rubredoxin oxidoreductase (NROR) and rubredoxin (Rd) as electron transport intermediaries from NADH to revRbr 1. Plays an important role in the oxidative stress defense system in C.acetobutylicum, an obligate anaerobic bacterium. Also exhibits NADH oxidase (NADH:O(2) oxidoreductase) activity in vitro, which is 100-fold lesser than that of FprA1/2 using the same electron transfer components. Therefore, its predominant function is most likely as a scavenger of its preferred substrate, H(2)O(2). This is Reverse rubrerythrin-1 (rbr3A) from Clostridium acetobutylicum (strain ATCC 824 / DSM 792 / JCM 1419 / IAM 19013 / LMG 5710 / NBRC 13948 / NRRL B-527 / VKM B-1787 / 2291 / W).